Consider the following 825-residue polypeptide: Zinc finger protein 229 (825 aa).

A disordered region spans residues 1–26 (METLTSRHEKRALHSQASAISQDREE). Residues 34-108 (LSFKDVAVVF…SHKELSSCKI (75 aa)) enclose the KRAB domain. A C2H2-type 1; degenerate zinc finger spans residues 291 to 315 (KLCQYDEFSEGLRHSAHLNRHQRVP). 7 consecutive C2H2-type zinc fingers follow at residues 349-371 (YRCD…QGVH), 377-399 (YKCE…QRVH), 405-427 (YKCS…QRLH), 433-455 (YTCS…QHIH), 461-483 (YSCG…QKTH), 489-511 (YQCD…QRVH), and 517-539 (YKCN…QRLH). Lys543 is covalently cross-linked (Glycyl lysine isopeptide (Lys-Gly) (interchain with G-Cter in SUMO2)). 10 consecutive C2H2-type zinc fingers follow at residues 545-566 (YKCE…QRVH), 572-594 (YKCS…QRVH), 600-622 (YVCD…QRVH), 628-650 (YKCA…QRVH), 656-678 (YRCQ…QRVH), 684-706 (YTCD…QRLH), 712-734 (YTCC…KRVH), 740-762 (YRCH…QRVH), 768-790 (YKCE…QRVH), and 796-818 (YTCG…QRVH).

It belongs to the krueppel C2H2-type zinc-finger protein family.

Its subcellular location is the nucleus. In terms of biological role, may be involved in transcriptional regulation. The sequence is that of Zinc finger protein 229 from Homo sapiens (Human).